The following is a 224-amino-acid chain: Prolactin-3D1 (224 aa).

The N-terminal stretch at 1–29 (MQLTLNLSGSAGMQLLLLVSSLLLWENVS) is a signal peptide. Cystine bridges form between cysteine 81-cysteine 199 and cysteine 216-cysteine 224. N-linked (GlcNAc...) asparagine glycans are attached at residues asparagine 109 and asparagine 158.

This sequence belongs to the somatotropin/prolactin family.

The protein localises to the secreted. The sequence is that of Prolactin-3D1 (Prl3d1) from Mus musculus (Mouse).